The sequence spans 436 residues: MQPVVETLSGLERRVDLAISVADVEKEVQAQLKRVARTAKVPGFRPGKAPMAMLERSHGPSVRYDVINSQVARAFEQAVEAAQLRVAGSPSLEPKTEGVDENTLAFSATFEVYPEVAVPDLSDLAVTRYETEVTDAEVDKTLDVLRKQRASYETREGRAAQDDDRIVLDFAGTIDGVPFEGGKAENFPFILGQGRMLPEFEEAARGLKAGDTKVFPLSFPEDYQGKEVAGKTAEFTITVKEVAEAVLPVVDAEFAKSLGQADADVEKLKADIRGNIEREVKVRSQGRTKTSVMDALVEAAKFDVPKSLVDNDVQGRIAQAREELKQRGVPNADSMPMPAEVFAVESERRVRLGLLVSELVKQQQLQAKPEQVRARIEEFAQNYEQPAQVVSYYLSDRQRRAEIEAIVLEDNVVAYVLEKAKVTDEKVPFDQLMGMA.

One can recognise a PPIase FKBP-type domain in the interval 163–248 (DDRIVLDFAG…VKEVAEAVLP (86 aa)).

It belongs to the FKBP-type PPIase family. Tig subfamily.

It localises to the cytoplasm. The catalysed reaction is [protein]-peptidylproline (omega=180) = [protein]-peptidylproline (omega=0). Functionally, involved in protein export. Acts as a chaperone by maintaining the newly synthesized protein in an open conformation. Functions as a peptidyl-prolyl cis-trans isomerase. This chain is Trigger factor, found in Bordetella avium (strain 197N).